We begin with the raw amino-acid sequence, 319 residues long: F-box only protein 8 (319 aa).

Positions 68 to 111 (FINLEMLPPELSFTILSYLNATDLCLASCVWQDLANDELLWQGL) constitute an F-box domain. The region spanning 146–276 (FNANPDEGVN…LILLSIDLTS (131 aa)) is the SEC7 domain.

Functionally, may promote guanine-nucleotide exchange on an ARF. Promotes the activation of ARF through replacement of GDP with GTP (Potential). This chain is F-box only protein 8 (FBXO8), found in Bos taurus (Bovine).